The following is a 520-amino-acid chain: Amine oxidase [flavin-containing] B (520 aa).

At Ser-2 the chain carries N-acetylserine. Topologically, residues 2–489 are cytoplasmic; sequence SNKSDVIVVG…TFLERHLPSV (488 aa). Lys-52 and Lys-248 each carry N6-acetyllysine. An S-8alpha-FAD cysteine modification is found at Cys-397. A helical; Anchor for type IV membrane protein membrane pass occupies residues 490 to 516; the sequence is PGLLKLFGLTTILSATALGFLAHKRGL. Residues 517–520 are Mitochondrial intermembrane-facing; that stretch reads FVHF.

The protein belongs to the flavin monoamine oxidase family. In terms of assembly, monomer, homo- or heterodimer (containing two subunits of similar size). Each subunit contains a covalently bound flavin. Enzymatically active as monomer. Requires FAD as cofactor.

It is found in the mitochondrion outer membrane. It catalyses the reaction a secondary aliphatic amine + O2 + H2O = a primary amine + an aldehyde + H2O2. It carries out the reaction (R)-adrenaline + O2 + H2O = (R)-3,4-dihydroxymandelaldehyde + methylamine + H2O2. The enzyme catalyses a primary methyl amine + O2 + H2O = an aldehyde + H2O2 + NH4(+). The catalysed reaction is benzylamine + O2 + H2O = benzaldehyde + H2O2 + NH4(+). It catalyses the reaction dopamine + O2 + H2O = 3,4-dihydroxyphenylacetaldehyde + H2O2 + NH4(+). It carries out the reaction tyramine + O2 + H2O = (4-hydroxyphenyl)acetaldehyde + H2O2 + NH4(+). The enzyme catalyses (R)-noradrenaline + O2 + H2O = (R)-3,4-dihydroxymandelaldehyde + H2O2 + NH4(+). The catalysed reaction is 2-phenylethylamine + O2 + H2O = 2-phenylacetaldehyde + H2O2 + NH4(+). It catalyses the reaction N-acetylputrescine + O2 + H2O = 4-acetamidobutanal + H2O2 + NH4(+). In terms of biological role, catalyzes the oxidative deamination of primary and some secondary amines such as neurotransmitters, and exogenous amines including the tertiary amine, neurotoxin 1-methyl-4-phenyl-1,2,3,6-tetrahydropyridine (MPTP), with concomitant reduction of oxygen to hydrogen peroxide and participates in the metabolism of neuroactive and vasoactive amines in the central nervous system and peripheral tissues. Preferentially degrades benzylamine and phenylethylamine. The polypeptide is Amine oxidase [flavin-containing] B (Mus musculus (Mouse)).